A 303-amino-acid chain; its full sequence is NAD kinase (303 aa).

Asp-85 serves as the catalytic Proton acceptor. NAD(+)-binding positions include Asp-85–Gly-86, Asn-159–Asp-160, Arg-187, Asp-189, Thr-200–Ser-205, Ala-224, and Gln-258.

It belongs to the NAD kinase family. A divalent metal cation serves as cofactor.

Its subcellular location is the cytoplasm. The catalysed reaction is NAD(+) + ATP = ADP + NADP(+) + H(+). Its function is as follows. Involved in the regulation of the intracellular balance of NAD and NADP, and is a key enzyme in the biosynthesis of NADP. Catalyzes specifically the phosphorylation on 2'-hydroxyl of the adenosine moiety of NAD to yield NADP. This Variovorax paradoxus (strain S110) protein is NAD kinase.